Reading from the N-terminus, the 263-residue chain is Protein YpjB (263 aa).

Over residues 233–244 (DFDDSSSEDDPV) the composition is skewed to acidic residues. The disordered stretch occupies residues 233–263 (DFDDSSSEDDPVENSPVVTSPVVSSSKSSFQ). The segment covering 245–263 (ENSPVVTSPVVSSSKSSFQ) has biased composition (low complexity).

This chain is Protein YpjB (ypjB), found in Escherichia coli (strain K12).